The sequence spans 494 residues: Cytochrome P450 2A11 (494 aa).

N6-acetyllysine is present on lysine 379. Cysteine 439 contacts heme.

This sequence belongs to the cytochrome P450 family. It depends on heme as a cofactor. As to expression, expressed in liver and lung as well as in nasal tissues.

The protein localises to the endoplasmic reticulum membrane. Its subcellular location is the microsome membrane. It carries out the reaction an organic molecule + reduced [NADPH--hemoprotein reductase] + O2 = an alcohol + oxidized [NADPH--hemoprotein reductase] + H2O + H(+). Its function is as follows. Catalyzes the oxygenation of a variety of substrates, including ethanol and procarcinogens such as N-nitrosodiethylamine and phenacetin. Has no or little activity as a coumarin 7-hydroxylase and in the formation of androstenedione from testosterone. This Oryctolagus cuniculus (Rabbit) protein is Cytochrome P450 2A11 (CYP2A11).